Reading from the N-terminus, the 423-residue chain is Probable histone-binding protein rbbD (423 aa).

6 WD repeats span residues 119-159, 172-212, 222-262, 266-306, 310-350, and 367-407; these read NHEG…LEPT, GHKK…KSDS, GHTS…KPIH, AHNS…NRLH, SHTD…EEQN, and GHTS…YNDR.

It belongs to the WD repeat RBAP46/RBAP48/MSI1 family. In terms of assembly, probably binds directly to helix 1 of the histone fold of histone H4, a region that is not accessible when H4 is in chromatin.

Its subcellular location is the nucleus. Its function is as follows. Core histone-binding subunit that may target chromatin assembly factors, chromatin remodeling factors and histone deacetylases to their histone substrates in a manner that is regulated by nucleosomal DNA. Component of several complexes which regulate chromatin metabolism. The polypeptide is Probable histone-binding protein rbbD (rbbD) (Dictyostelium discoideum (Social amoeba)).